The following is a 180-amino-acid chain: Nucleoside triphosphate/diphosphate phosphatase (180 aa).

Arg-26 (proton donor) is an active-site residue. Positions 90, 106, 108, 110, 123, and 126 each coordinate Mg(2+).

It belongs to the Ntdp family. Mg(2+) serves as cofactor.

It carries out the reaction a ribonucleoside 5'-triphosphate + H2O = a ribonucleoside 5'-diphosphate + phosphate + H(+). The enzyme catalyses a ribonucleoside 5'-diphosphate + H2O = a ribonucleoside 5'-phosphate + phosphate + H(+). Its function is as follows. Has nucleoside phosphatase activity towards nucleoside triphosphates and nucleoside diphosphates. The sequence is that of Nucleoside triphosphate/diphosphate phosphatase from Staphylococcus haemolyticus (strain JCSC1435).